The chain runs to 146 residues: Envelope protein OPG155 (146 aa).

The chain crosses the membrane as a helical; Signal-anchor for type II membrane protein span at residues 1 to 21 (MNSLSIFFIVVATAAVCLLFI). Over 22–146 (QSYSIYENYG…TECQFLKSVL (125 aa)) the chain is Virion surface.

It belongs to the orthopoxvirus OPG155 protein family. As to quaternary structure, part of a stable entry-fusion complex (EFC) which is at least composed of proteins OPG143, OPG147, OPG155, OPG086, OPG094, OPG107, OPG104, and OPG099. Formation of the viral membrane is necessary for the assembly of the complex. Interacts directly with protein OPG107. In terms of processing, contains two intramolecular disulfide bonds. They are created by the viral disulfide bond formation pathway, a poxvirus-specific pathway that operates on the cytoplasmic side of the MV membranes.

The protein resides in the virion membrane. In terms of biological role, envelope protein required for virus entry into host cell and for cell-cell fusion (syncytium formation). This chain is Envelope protein OPG155 (OPG155), found in Monkeypox virus (strain Zaire-96-I-16) (MPX).